We begin with the raw amino-acid sequence, 154 residues long: 6,7-dimethyl-8-ribityllumazine synthase (154 aa).

5-amino-6-(D-ribitylamino)uracil is bound by residues F21, 55 to 57 (AFE), and 79 to 81 (CVI). 84–85 (AT) provides a ligand contact to (2S)-2-hydroxy-3-oxobutyl phosphate. Catalysis depends on H87, which acts as the Proton donor. A 5-amino-6-(D-ribitylamino)uracil-binding site is contributed by F112. Position 126 (R126) interacts with (2S)-2-hydroxy-3-oxobutyl phosphate.

It belongs to the DMRL synthase family. Forms an icosahedral capsid composed of 60 subunits, arranged as a dodecamer of pentamers.

The catalysed reaction is (2S)-2-hydroxy-3-oxobutyl phosphate + 5-amino-6-(D-ribitylamino)uracil = 6,7-dimethyl-8-(1-D-ribityl)lumazine + phosphate + 2 H2O + H(+). The protein operates within cofactor biosynthesis; riboflavin biosynthesis; riboflavin from 2-hydroxy-3-oxobutyl phosphate and 5-amino-6-(D-ribitylamino)uracil: step 1/2. Functionally, catalyzes the formation of 6,7-dimethyl-8-ribityllumazine by condensation of 5-amino-6-(D-ribitylamino)uracil with 3,4-dihydroxy-2-butanone 4-phosphate. This is the penultimate step in the biosynthesis of riboflavin. The polypeptide is 6,7-dimethyl-8-ribityllumazine synthase (Staphylococcus aureus (strain Newman)).